The primary structure comprises 79 residues: uncharacterized protein (79 aa).

The chain crosses the membrane as a helical span at residues 53 to 73 (LFFAYMVAYIGFGILSIGMIV).

It localises to the membrane. This is an uncharacterized protein from Escherichia coli O157:H7.